Here is a 666-residue protein sequence, read N- to C-terminus: Hybrid PKS-NRPS synthetase pytA (666 aa).

In terms of domain architecture, Ketosynthase family 3 (KS3) spans 1-340 (MDPQQRLLLE…GTNAHAILEE (340 aa)). Active-site for beta-ketoacyl synthase activity residues include cysteine 87, histidine 222, and histidine 260. Positions 455 to 665 (VFTGQGAQWF…VFVHSLVIKR (211 aa)) are malonyl-CoA:ACP transacylase (MAT) domain. Serine 548 functions as the For malonyltransferase activity in the catalytic mechanism.

In the C-terminal section; belongs to the NRP synthetase family.

It functions in the pathway secondary metabolite biosynthesis. In terms of biological role, hybrid PKS-NRPS synthetase; part of the gene cluster that mediates the biosynthesis of pyranterreones, a family of antioxidative compounds. The first step of pyranonigrins biosynthesis is performed by the hybrid PKS-NRPS synthetase pytA that condenses 4 malonyl-CoA units ato the acetyl starter unit by the modular PKS of pytA. The acyl chain is then connected to an L-serine through the amide bond by the modular NRPS of pytA. A tetramic acid is formed and released from the PKS-NRPS pytA to give pyranterreone 5 with the help of the thioesterase pytI. Pyranterreone 5 could be methylated by pytC to afford pyranterreone 6. Both pyranterreones 5 and 6 are subsequently oxidized by the FAD-linked oxidoreductase pytB and the cytochrome P450 monooxygenase pytD to form the fused gamma-pyrone core, resulting in pyranterreones 7 and 11, respectively. The hydroxy group at C-8 of pyranterreones 7 and 11 are dehydrated by the aspartyl protease pytH to form a delta-7 double bond to give pyranterreones 3 and 1, 2 accordingly. The exo-methylene of pyranterreone 3 could be reduced into a pendant methyl by reductase pytE to provide pyranterreone 4, also known as cordylactam. Pyranterreone 4 can be reconverted to pyranterreone 3 through pytB-catalyzed dehydrogenation or further oxidized to pyranterreones 9 and 10. The protein is Hybrid PKS-NRPS synthetase pytA of Aspergillus terreus (strain NIH 2624 / FGSC A1156).